Reading from the N-terminus, the 98-residue chain is NADH-ubiquinone oxidoreductase chain 4L (98 aa).

3 consecutive transmembrane segments (helical) span residues 1 to 21, 26 to 46, and 61 to 81; these read MPSI…GTLI, LMSS…LTSL, and IILL…LVMV.

It belongs to the complex I subunit 4L family. As to quaternary structure, core subunit of respiratory chain NADH dehydrogenase (Complex I) which is composed of 45 different subunits.

It localises to the mitochondrion inner membrane. It catalyses the reaction a ubiquinone + NADH + 5 H(+)(in) = a ubiquinol + NAD(+) + 4 H(+)(out). Core subunit of the mitochondrial membrane respiratory chain NADH dehydrogenase (Complex I) which catalyzes electron transfer from NADH through the respiratory chain, using ubiquinone as an electron acceptor. Part of the enzyme membrane arm which is embedded in the lipid bilayer and involved in proton translocation. This is NADH-ubiquinone oxidoreductase chain 4L (MT-ND4L) from Otolemur crassicaudatus (Brown greater galago).